The sequence spans 785 residues: E3 UFM1-protein ligase 1 homolog (785 aa).

A compositionally biased stretch (basic and acidic residues) spans 396–416 (MKHQDVIPDKESAENKADKRD). The tract at residues 396 to 473 (MKHQDVIPDK…KSAGGKKGAK (78 aa)) is disordered. Over residues 439–449 (KSTKKHARGHR) the composition is skewed to basic residues.

This sequence belongs to the UFL1 family.

Its function is as follows. E3 UFM1-protein ligase that mediates ufmylation of target proteins. This is E3 UFM1-protein ligase 1 homolog from Culex quinquefasciatus (Southern house mosquito).